A 196-amino-acid polypeptide reads, in one-letter code: DnaA initiator-associating protein DiaA (196 aa).

One can recognise an SIS domain in the interval 34–196; that stretch reads LVQSLLNGNK…DNTLFPHQND (163 aa).

Belongs to the SIS family. DiaA subfamily. In terms of assembly, homotetramer; dimer of dimers.

Its function is as follows. Required for the timely initiation of chromosomal replication via direct interactions with the DnaA initiator protein. The sequence is that of DnaA initiator-associating protein DiaA from Yersinia pestis bv. Antiqua (strain Antiqua).